The chain runs to 454 residues: MKQNSLNVKEKKLSKVAFSHVGCEKNLVDTEHMQGLLDKEGYEVDSNINDANVVVVNTCSFIETAREESIRKILEYTNQGKEVIVAGCMAQHFKDELIREIPEIKGLVGTGDYQKIAKVLDRVEQGEIVNEVSKIPEFIADEEMPRFVDKNKFVAYLRIAEGCNYNCAFCIIPKLRGPQRSRTIESIVSEAKSLAKKGIQEIILISQITTNYGQDIYGKPSLAKLLNELSKVSIPWIRIHYAYPTGLTDEVIRAFKDSKNIVPYFDLPLQHSHPDVLKSMNRPWQASLNESILEKIREEIPSAVLRTSLIVGFPGEKKEHFEHLLQFLDRHKFDHVGVFIFSPEEGTTAFHLPNKVSLEVAEARKDNVISVQQNISKDKNQTYVGSKMKILVEKISDNNELIGRSYNFAPEIDGTVILSVKDKIDLKNYIGKFVEANITFADEYDLYGEIIKIL.

Residues 14 to 125 form the MTTase N-terminal domain; the sequence is SKVAFSHVGC…IAKVLDRVEQ (112 aa). The [4Fe-4S] cluster site is built by cysteine 23, cysteine 59, cysteine 88, cysteine 163, cysteine 167, and cysteine 170. The Radical SAM core domain maps to 149–378; that stretch reads DKNKFVAYLR…ISVQQNISKD (230 aa). The region spanning 381–452 is the TRAM domain; the sequence is QTYVGSKMKI…EYDLYGEIIK (72 aa).

Belongs to the methylthiotransferase family. RimO subfamily. [4Fe-4S] cluster is required as a cofactor.

The protein resides in the cytoplasm. The enzyme catalyses L-aspartate(89)-[ribosomal protein uS12]-hydrogen + (sulfur carrier)-SH + AH2 + 2 S-adenosyl-L-methionine = 3-methylsulfanyl-L-aspartate(89)-[ribosomal protein uS12]-hydrogen + (sulfur carrier)-H + 5'-deoxyadenosine + L-methionine + A + S-adenosyl-L-homocysteine + 2 H(+). Its function is as follows. Catalyzes the methylthiolation of an aspartic acid residue of ribosomal protein uS12. In Prochlorococcus marinus (strain AS9601), this protein is Ribosomal protein uS12 methylthiotransferase RimO.